The chain runs to 668 residues: tRNA 5-methylaminomethyl-2-thiouridine biosynthesis bifunctional protein MnmC (668 aa).

The tRNA (mnm(5)s(2)U34)-methyltransferase stretch occupies residues 1–245; sequence MKHYSIQPAN…KREMLCGVME (245 aa). The interval 270 to 668 is FAD-dependent cmnm(5)s(2)U34 oxidoreductase; sequence IGGGIASALL…LLKGKAVKAG (399 aa).

It in the N-terminal section; belongs to the methyltransferase superfamily. tRNA (mnm(5)s(2)U34)-methyltransferase family. The protein in the C-terminal section; belongs to the DAO family. FAD serves as cofactor.

It localises to the cytoplasm. It catalyses the reaction 5-aminomethyl-2-thiouridine(34) in tRNA + S-adenosyl-L-methionine = 5-methylaminomethyl-2-thiouridine(34) in tRNA + S-adenosyl-L-homocysteine + H(+). Functionally, catalyzes the last two steps in the biosynthesis of 5-methylaminomethyl-2-thiouridine (mnm(5)s(2)U) at the wobble position (U34) in tRNA. Catalyzes the FAD-dependent demodification of cmnm(5)s(2)U34 to nm(5)s(2)U34, followed by the transfer of a methyl group from S-adenosyl-L-methionine to nm(5)s(2)U34, to form mnm(5)s(2)U34. This chain is tRNA 5-methylaminomethyl-2-thiouridine biosynthesis bifunctional protein MnmC, found in Escherichia coli O6:H1 (strain CFT073 / ATCC 700928 / UPEC).